Reading from the N-terminus, the 693-residue chain is Elongation factor G (693 aa).

In terms of domain architecture, tr-type G spans 8-282 (EKTRNIGIMA…AVIDYLPSPL (275 aa)). GTP is bound by residues 17 to 24 (AHIDAGKT), 81 to 85 (DTPGH), and 135 to 138 (NKMD).

This sequence belongs to the TRAFAC class translation factor GTPase superfamily. Classic translation factor GTPase family. EF-G/EF-2 subfamily.

It is found in the cytoplasm. Its function is as follows. Catalyzes the GTP-dependent ribosomal translocation step during translation elongation. During this step, the ribosome changes from the pre-translocational (PRE) to the post-translocational (POST) state as the newly formed A-site-bound peptidyl-tRNA and P-site-bound deacylated tRNA move to the P and E sites, respectively. Catalyzes the coordinated movement of the two tRNA molecules, the mRNA and conformational changes in the ribosome. In Staphylococcus aureus (strain Newman), this protein is Elongation factor G.